Consider the following 62-residue polypeptide: Probable tautomerase RSc0807 (62 aa).

The active-site Proton acceptor; via imino nitrogen is P2.

It belongs to the 4-oxalocrotonate tautomerase family.

This is Probable tautomerase RSc0807 from Ralstonia nicotianae (strain ATCC BAA-1114 / GMI1000) (Ralstonia solanacearum).